Here is a 374-residue protein sequence, read N- to C-terminus: GPN-loop GTPase 1 (374 aa).

The residue at position 2 (A2) is an N-acetylalanine. A GTP-binding site is contributed by 29–34 (GSGKTT). The short motif at 86–88 (GPN) is the Gly-Pro-Asn (GPN)-loop; involved in dimer interface element. 189–192 (NKTD) serves as a coordination point for GTP. Residues S301, S312, and S314 each carry the phosphoserine modification. Residues 326-354 (RGTLDEEDEEADSDTDDIDHRVTEESHEE) are disordered. T328 bears the Phosphothreonine mark. Acidic residues predominate over residues 330 to 342 (DEEDEEADSDTDD). Phosphoserine is present on S338. T340 bears the Phosphothreonine mark. Positions 343–354 (IDHRVTEESHEE) are enriched in basic and acidic residues.

It belongs to the GPN-loop GTPase family. In terms of assembly, heterodimer with GPN3. Binds to RNA polymerase II (RNAPII). Interacts directly with RNAPII subunits RPB4 and RPB7 and the CTD of RPB1. Interacts with XPA. In terms of tissue distribution, expressed ubiquitously.

It localises to the cytoplasm. The protein localises to the nucleus. Small GTPase required for proper nuclear import of RNA polymerase II (RNAPII). May act at an RNAP assembly step prior to nuclear import. Forms an interface between the RNA polymerase II enzyme and chaperone/scaffolding proteins, suggesting that it is required to connect RNA polymerase II to regulators of protein complex formation. May be involved in nuclear localization of XPA. This chain is GPN-loop GTPase 1, found in Homo sapiens (Human).